A 240-amino-acid polypeptide reads, in one-letter code: Type II restriction enzyme DdeI (240 aa).

The enzyme catalyses Endonucleolytic cleavage of DNA to give specific double-stranded fragments with terminal 5'-phosphates.. Functionally, a P subtype restriction enzyme that recognizes the double-stranded sequence 5'-CTNAG-3' and cleaves after C-1. This Desulfomicrobium norvegicum (strain DSM 1741 / NCIMB 8310) (Desulfovibrio baculatus (strain Norway 4)) protein is Type II restriction enzyme DdeI (ddeIR).